Here is a 120-residue protein sequence, read N- to C-terminus: UPF0342 protein LAF_1331 (120 aa).

Belongs to the UPF0342 family.

This chain is UPF0342 protein LAF_1331, found in Limosilactobacillus fermentum (strain NBRC 3956 / LMG 18251) (Lactobacillus fermentum).